A 524-amino-acid chain; its full sequence is Peptide chain release factor 3 (524 aa).

Positions 9 to 275 constitute a tr-type G domain; the sequence is SRRRTFAIIS…AVVDLSPPPI (267 aa). Residues 18–25, 86–90, and 140–143 each bind GTP; these read SHPDAGKT, DTPGH, and NKLD.

This sequence belongs to the TRAFAC class translation factor GTPase superfamily. Classic translation factor GTPase family. PrfC subfamily.

The protein localises to the cytoplasm. In terms of biological role, increases the formation of ribosomal termination complexes and stimulates activities of RF-1 and RF-2. It binds guanine nucleotides and has strong preference for UGA stop codons. It may interact directly with the ribosome. The stimulation of RF-1 and RF-2 is significantly reduced by GTP and GDP, but not by GMP. The chain is Peptide chain release factor 3 from Dechloromonas aromatica (strain RCB).